A 227-amino-acid chain; its full sequence is Enolase-phosphatase E1 (227 aa).

This sequence belongs to the HAD-like hydrolase superfamily. MasA/MtnC family. Monomer. Mg(2+) is required as a cofactor.

It carries out the reaction 5-methylsulfanyl-2,3-dioxopentyl phosphate + H2O = 1,2-dihydroxy-5-(methylsulfanyl)pent-1-en-3-one + phosphate. Its pathway is amino-acid biosynthesis; L-methionine biosynthesis via salvage pathway; L-methionine from S-methyl-5-thio-alpha-D-ribose 1-phosphate: step 3/6. It participates in amino-acid biosynthesis; L-methionine biosynthesis via salvage pathway; L-methionine from S-methyl-5-thio-alpha-D-ribose 1-phosphate: step 4/6. In terms of biological role, bifunctional enzyme that catalyzes the enolization of 2,3-diketo-5-methylthiopentyl-1-phosphate (DK-MTP-1-P) into the intermediate 2-hydroxy-3-keto-5-methylthiopentenyl-1-phosphate (HK-MTPenyl-1-P), which is then dephosphorylated to form the acireductone 1,2-dihydroxy-3-keto-5-methylthiopentene (DHK-MTPene). The protein is Enolase-phosphatase E1 of Methylococcus capsulatus (strain ATCC 33009 / NCIMB 11132 / Bath).